The following is a 458-amino-acid chain: Forkhead box protein J1-A (458 aa).

Positions 68–78 (TGQHTSPSSHS) are enriched in polar residues. Residues 68–99 (TGQHTSPSSHSHLMGSDAPSSPLAGDPASIGM) form a disordered region. A DNA-binding region (fork-head) is located at residues 142–236 (KPPYSYATLI…LNGAYKKRRL (95 aa)). Positions 305–321 (TNKRKQPYNHRTGKTPR) are enriched in basic residues. Residues 305 to 324 (TNKRKQPYNHRTGKTPRRSS) are disordered.

It belongs to the FOXJ1 family. In terms of tissue distribution, expressed in floor plate, dorsal forerunner cells, Kupffers vesicle, the floor plate, pronephric ducts and kidney.

The protein resides in the nucleus. Functionally, key transcription factor required for motile ciliogenesis. Activates genes essential for motile cilia formation and function. Its activity is sufficient for ectopic development of cilia that resemble motile cilia. This Danio rerio (Zebrafish) protein is Forkhead box protein J1-A.